Consider the following 132-residue polypeptide: NADH-quinone oxidoreductase subunit A 2 (132 aa).

A run of 3 helical transmembrane segments spans residues 10–30, 66–86, and 93–113; these read WALLAYLFGALALCLLMLGLG, LVAMLFVIFGIEMPFLYLWAV, and WAGFVEATLFVSLLLVGLFYL.

The protein belongs to the complex I subunit 3 family. In terms of assembly, NDH-1 is composed of 13 different subunits. Subunits NuoA, H, J, K, L, M, N constitute the membrane sector of the complex.

It is found in the cell inner membrane. It catalyses the reaction a quinone + NADH + 5 H(+)(in) = a quinol + NAD(+) + 4 H(+)(out). In terms of biological role, NDH-1 shuttles electrons from NADH, via FMN and iron-sulfur (Fe-S) centers, to quinones in the respiratory chain. The immediate electron acceptor for the enzyme in this species is believed to be ubiquinone. Couples the redox reaction to proton translocation (for every two electrons transferred, four hydrogen ions are translocated across the cytoplasmic membrane), and thus conserves the redox energy in a proton gradient. In Pseudomonas aeruginosa (strain UCBPP-PA14), this protein is NADH-quinone oxidoreductase subunit A 2.